We begin with the raw amino-acid sequence, 395 residues long: Succinyl-diaminopimelate desuccinylase (395 aa).

Histidine 74 contacts Zn(2+). Residue aspartate 76 is part of the active site. Residue aspartate 107 coordinates Zn(2+). Glutamate 141 serves as the catalytic Proton acceptor. Glutamate 142, glutamate 170, and histidine 368 together coordinate Zn(2+).

It belongs to the peptidase M20A family. DapE subfamily. Homodimer. Zn(2+) is required as a cofactor. Requires Co(2+) as cofactor.

The catalysed reaction is N-succinyl-(2S,6S)-2,6-diaminopimelate + H2O = (2S,6S)-2,6-diaminopimelate + succinate. It participates in amino-acid biosynthesis; L-lysine biosynthesis via DAP pathway; LL-2,6-diaminopimelate from (S)-tetrahydrodipicolinate (succinylase route): step 3/3. Catalyzes the hydrolysis of N-succinyl-L,L-diaminopimelic acid (SDAP), forming succinate and LL-2,6-diaminopimelate (DAP), an intermediate involved in the bacterial biosynthesis of lysine and meso-diaminopimelic acid, an essential component of bacterial cell walls. This chain is Succinyl-diaminopimelate desuccinylase, found in Brucella canis (strain ATCC 23365 / NCTC 10854 / RM-666).